Reading from the N-terminus, the 201-residue chain is Large ribosomal subunit protein uL4 (201 aa).

A disordered region spans residues 44–68 (RAQKSRAEVSGSGRKPWRQKGTGRA).

Belongs to the universal ribosomal protein uL4 family. As to quaternary structure, part of the 50S ribosomal subunit.

Functionally, one of the primary rRNA binding proteins, this protein initially binds near the 5'-end of the 23S rRNA. It is important during the early stages of 50S assembly. It makes multiple contacts with different domains of the 23S rRNA in the assembled 50S subunit and ribosome. Forms part of the polypeptide exit tunnel. This is Large ribosomal subunit protein uL4 from Buchnera aphidicola subsp. Acyrthosiphon pisum (strain 5A).